A 215-amino-acid chain; its full sequence is Phosphatidylserine decarboxylase proenzyme (215 aa).

The active-site Schiff-base intermediate with substrate; via pyruvic acid is the Ser-184. At Ser-184 the chain carries Pyruvic acid (Ser); by autocatalysis.

Belongs to the phosphatidylserine decarboxylase family. PSD-A subfamily. Heterodimer of a large membrane-associated beta subunit and a small pyruvoyl-containing alpha subunit. The cofactor is pyruvate. Post-translationally, is synthesized initially as an inactive proenzyme. Formation of the active enzyme involves a self-maturation process in which the active site pyruvoyl group is generated from an internal serine residue via an autocatalytic post-translational modification. Two non-identical subunits are generated from the proenzyme in this reaction, and the pyruvate is formed at the N-terminus of the alpha chain, which is derived from the carboxyl end of the proenzyme. The post-translation cleavage follows an unusual pathway, termed non-hydrolytic serinolysis, in which the side chain hydroxyl group of the serine supplies its oxygen atom to form the C-terminus of the beta chain, while the remainder of the serine residue undergoes an oxidative deamination to produce ammonia and the pyruvoyl prosthetic group on the alpha chain.

It localises to the cell membrane. The enzyme catalyses a 1,2-diacyl-sn-glycero-3-phospho-L-serine + H(+) = a 1,2-diacyl-sn-glycero-3-phosphoethanolamine + CO2. Its pathway is phospholipid metabolism; phosphatidylethanolamine biosynthesis; phosphatidylethanolamine from CDP-diacylglycerol: step 2/2. Catalyzes the formation of phosphatidylethanolamine (PtdEtn) from phosphatidylserine (PtdSer). In Aromatoleum aromaticum (strain DSM 19018 / LMG 30748 / EbN1) (Azoarcus sp. (strain EbN1)), this protein is Phosphatidylserine decarboxylase proenzyme.